Consider the following 600-residue polypeptide: Probable tripeptidyl-peptidase SED4 (600 aa).

A signal peptide spans 1–22 (MVSFTLRAIGACLIGLPALITA). Positions 23 to 202 (APTSHVSNGF…SVFTSDLEMT (180 aa)) are cleaved as a propeptide — removed in mature form. Residues N210 and N281 are each glycosylated (N-linked (GlcNAc...) asparagine). Residues 212 to 600 (TITPDCIREL…FEKLSKLVLI (389 aa)) enclose the Peptidase S53 domain. Catalysis depends on charge relay system residues E288 and D292. 2 N-linked (GlcNAc...) asparagine glycosylation sites follow: N323 and N404. Catalysis depends on S504, which acts as the Charge relay system. Ca(2+) contacts are provided by D546, I547, G579, and D581.

Ca(2+) is required as a cofactor.

It localises to the secreted. The protein localises to the extracellular space. The enzyme catalyses Release of an N-terminal tripeptide from a polypeptide.. Functionally, secreted tripeptidyl-peptidase which degrades proteins at acidic pHs and is involved in virulence. The chain is Probable tripeptidyl-peptidase SED4 (SED4) from Trichophyton verrucosum (strain HKI 0517).